The sequence spans 302 residues: Oxygen-dependent coproporphyrinogen-III oxidase (302 aa).

Ser94 serves as a coordination point for substrate. A divalent metal cation is bound by residues His98 and His108. His108 acts as the Proton donor in catalysis. Residue 110-112 (NVR) coordinates substrate. His147 and His177 together coordinate a divalent metal cation. The important for dimerization stretch occupies residues 242–277 (YVEFNLVWDRGTLFGLQSGGRTESILMSMPPLVRWE). 260-262 (GGR) is a substrate binding site.

Belongs to the aerobic coproporphyrinogen-III oxidase family. Homodimer. The cofactor is a divalent metal cation.

It localises to the cytoplasm. It catalyses the reaction coproporphyrinogen III + O2 + 2 H(+) = protoporphyrinogen IX + 2 CO2 + 2 H2O. It functions in the pathway porphyrin-containing compound metabolism; protoporphyrin-IX biosynthesis; protoporphyrinogen-IX from coproporphyrinogen-III (O2 route): step 1/1. Its function is as follows. Involved in the heme biosynthesis. Catalyzes the aerobic oxidative decarboxylation of propionate groups of rings A and B of coproporphyrinogen-III to yield the vinyl groups in protoporphyrinogen-IX. The sequence is that of Oxygen-dependent coproporphyrinogen-III oxidase from Chromobacterium violaceum (strain ATCC 12472 / DSM 30191 / JCM 1249 / CCUG 213 / NBRC 12614 / NCIMB 9131 / NCTC 9757 / MK).